A 190-amino-acid polypeptide reads, in one-letter code: Probable nicotinate-nucleotide adenylyltransferase (190 aa).

The protein belongs to the NadD family.

It catalyses the reaction nicotinate beta-D-ribonucleotide + ATP + H(+) = deamido-NAD(+) + diphosphate. The protein operates within cofactor biosynthesis; NAD(+) biosynthesis; deamido-NAD(+) from nicotinate D-ribonucleotide: step 1/1. Catalyzes the reversible adenylation of nicotinate mononucleotide (NaMN) to nicotinic acid adenine dinucleotide (NaAD). The polypeptide is Probable nicotinate-nucleotide adenylyltransferase (Azobacteroides pseudotrichonymphae genomovar. CFP2).